The sequence spans 267 residues: Centromere protein Q (267 aa).

Composition is skewed to basic residues over residues 1–22 (MSGK…LKQR) and 39–49 (KRNRSHAKHLS). A disordered region spans residues 1–54 (MSGKARASRKKPQQVKRSLKQRANKEADLPENEVGNTAKRNRSHAKHLSSKVTG). Ser-49 carries the post-translational modification Phosphoserine. A coiled-coil region spans residues 100–202 (IKRKEEIQCH…EEQEVKQVFH (103 aa)).

This sequence belongs to the CENP-Q/OKP1 family. In terms of assembly, component of the CENPA-CAD complex, composed of CENPI, CENPK, CENPL, CENPO, CENPP, CENPQ, CENPR and CENPS. The CENPA-CAD complex interacts with the CENPA-NAC complex, at least composed of CENPA, CENPC, CENPH, CENPM, CENPN, CENPT and CENPU. Phosphorylation at Ser-49 is essential for CENPE recruitment to kinetochores and orderly chromosome congression.

The protein resides in the nucleus. Its subcellular location is the chromosome. It localises to the centromere. Component of the CENPA-CAD (nucleosome distal) complex, a complex recruited to centromeres which is involved in assembly of kinetochore proteins, mitotic progression and chromosome segregation. May be involved in incorporation of newly synthesized CENPA into centromeres via its interaction with the CENPA-NAC complex. Plays an important role in chromosome congression and in the recruitment of CENP-O complex (which comprises CENPO, CENPP, CENPQ and CENPU), CENPE and PLK1 to the kinetochores. The sequence is that of Centromere protein Q (Cenpq) from Mus musculus (Mouse).